A 506-amino-acid chain; its full sequence is Fe(3+)-transport system permease protein FbpB 2 (506 aa).

12 helical membrane-spanning segments follow: residues 9-29 (LTLLIILIGLPLCLPFLYVIL), 57-77 (LLMVCVTIGAISLGTFCAFLL), 90-110 (VAMTLPLCIPAFVSGFTWISL), 116-136 (VFWGTIGIMTLSSFPLAYLPV), 174-194 (IGSSILLIALHMLVEFGAVSI), 218-238 (ALLSAVLMAICILIVFGEIFF), 275-295 (IFILSIGVPVIMLIYWLIVGT), 314-334 (FIISGLGALLTVMCALPLVWA), 350-370 (PYLLHAVPGLVIALSLVYFSI), 379-399 (TFFVIIIAYFMLYLPMAQTTL), 428-448 (LTLPAILPGVAAAFALVFLNL), and 480-500 (AAATPYALMLVLFSGIPVFLL). The ABC transmembrane type-1 1 domain maps to 52-233 (LSNTMLLMVC…LMAICILIVF (182 aa)). In terms of domain architecture, ABC transmembrane type-1 2 spans 310 to 500 (FSNSFIISGL…LFSGIPVFLL (191 aa)).

This sequence belongs to the binding-protein-dependent transport system permease family. FbpB subfamily. As to quaternary structure, the complex is composed of two ATP-binding proteins (FbpC), two transmembrane proteins (FbpB) and a solute-binding protein (FbpA).

It is found in the cell inner membrane. Its function is as follows. Part of the ABC transporter complex FbpABC (TC 3.A.1.10.1) involved in Fe(3+) ions import. Probably responsible for the translocation of the substrate across the membrane. This is Fe(3+)-transport system permease protein FbpB 2 (fbpB2) from Haemophilus influenzae (strain ATCC 51907 / DSM 11121 / KW20 / Rd).